Here is a 372-residue protein sequence, read N- to C-terminus: Protein L-Myc-1a (372 aa).

2 disordered regions span residues 172–226 and 243–306; these read KVAA…ADPF and NYAA…DDLR. A compositionally biased stretch (acidic residues) spans 187 to 197; the sequence is SDDDEDDDEID. Positions 269–284 are enriched in low complexity; sequence ESSSAPSSPLSSPATS. Residues 289–341 form the bHLH domain; that stretch reads STEQRRNFLERKRRDDLRSRFQALREEIPGLSGSSKTSKVAILTQATDYLLQL. The span at 290–306 shows a compositional bias: basic and acidic residues; it reads TEQRRNFLERKRRDDLR. Positions 341–369 are leucine-zipper; it reads LHSSQRRQAQEKRKLKAKQQQLLRRISAL.

As to quaternary structure, efficient DNA binding requires dimerization with another bHLH protein. Binds DNA as a heterodimer with max. In terms of tissue distribution, uterus.

The protein resides in the nucleus. The chain is Protein L-Myc-1a from Danio rerio (Zebrafish).